A 954-amino-acid polypeptide reads, in one-letter code: MLKATRKQADPYKSKLKVSASHSGPHPLPVEVTAAEEEQAATFGQTSPQKLSLKGSQLGGSILIGNYNYLTQLEVCENEMEVLDLSSLAQLETLKCSRNKLMELIINGTNLQTLVADHNYLHNISTTNTHPVPLKLQRIDISHNNFSELPNWVGACASLTAINASHNRLNNVAVLLRNYRITELVSLDLAYNDLKQLDQFPEGFSSIRSLQLQSNELPSLPDNFFAVTHARLETLNVSCNKLSTLPRYEQNNHAALVNLSLAGNHLNDSIFEPLHNAAKLRVLHLAYNRIGVLPAACVRNWPELEILVLSGNMLQQLPEEVATLGQLRVLRCCNNLLLCTPQLAKLAMLKVLDLSHNHLDRVNLLALVPSRNLKYLDLSGNLQLQVDEQQFKVCQSQSQRHWSLVDVSGNNRAALPTTKIRQVSAQRNQNKTSGPWTMGFAETPGSGDCRKLSVYQLRAANYGGSDEALYGMFEALEGRGRAAQEMSHLVPDLMKQEQMVKDSAVRDYMKFTLLAAQQQCGSVRSAALFHLTRTRAPSKVRPLKSKRYVLRMASTGGLDAYLIRRTSQLRLTKPDVIQKDQIHSMPDPHVLELILSNDDEYLVVGNAQLWSVMDIDRAAREIRKEENSLLAAKRLVDIAQSFAAAESLSVIVVRFRHLGTDVDHLIRELKQSVRKKPQPVSLPLSSGSVCKRTCCDRSNACRHRAIEQEPLAGRSSPSGQSDRDLLAKDKDDEFVLAHARVLQEEQQLEMLDETESVSESVLSEEQFKCWEYMLEQNTQLLFDKELNTISKSFTKQRTVPNAIMAATVLPERNDFTSNLMRTVTNKFISTSTPQLPQPITTSVPLGSYHQVKQAPPGHFGSALSFQQAHSYGYNLFDAKPRPKFHGGTVKRSAGPNSAYFGSLQRLMPYNFEYDFAVTQERERNILDEEEHDDDDFNEHESRMRKYWGVATTEL.

The disordered stretch occupies residues 1–28; it reads MLKATRKQADPYKSKLKVSASHSGPHPL. LRR repeat units follow at residues 69 to 89, 90 to 104, 110 to 131, 135 to 156, 158 to 179, 183 to 202, 206 to 227, 231 to 252, 255 to 275, 279 to 300, 303 to 324, 326 to 347, 348 to 369, and 372 to 393; these read YLTQ…SSLA, QLET…LMEL, NLQT…NTHP, KLQR…VGAC, SLTA…LRNY, ELVS…QFPE, SIRS…FFAV, RLET…EQNN, ALVN…EPLH, KLRV…CVRN, ELEI…VATL, QLRV…AKLA, MLKV…ALVP, and NLKY…QFKV. One can recognise a PPM-type phosphatase domain in the interval 437 to 655; the sequence is TMGFAETPGS…ESLSVIVVRF (219 aa).

The cofactor is Mn(2+).

It catalyses the reaction O-phospho-L-seryl-[protein] + H2O = L-seryl-[protein] + phosphate. The catalysed reaction is O-phospho-L-threonyl-[protein] + H2O = L-threonyl-[protein] + phosphate. Its function is as follows. Protein phosphatase that specifically mediates dephosphorylation of 'Ser-586' of Akt1, a protein that regulates the balance between cell survival and apoptosis through a cascade that primarily alters the function of transcription factors that regulate pro- and antiapoptotic genes. Dephosphorylation of 'Ser-586' of Akt1 triggers apoptosis and suppression of tumor growth. The chain is Protein phosphatase PHLPP-like protein (Phlpp) from Drosophila melanogaster (Fruit fly).